A 420-amino-acid chain; its full sequence is Nucleoprotein (420 aa).

Polar residues-rich tracts occupy residues 1-11 and 21-30; these read MSDNGPQNQRS and SDSTDNNQDG. Positions 1–49 are disordered; that stretch reads MSDNGPQNQRSAPRITFGGPSDSTDNNQDGGRSGARPKQRRPQGLPNNT. The segment at 41–186 is RNA-binding; that stretch reads RPQGLPNNTA…RGGSQASSRS (146 aa). The region spanning 48–175 is the CoV N NTD domain; it reads NTASWFTALT…TLPKGFYAEG (128 aa). RNA-binding residues include Arg92, Arg107, and Arg149. Disordered regions lie at residues 168 to 214, 233 to 286, and 362 to 420; these read PKGF…ASGS, KVSG…QGNF, and AFPP…STQA. Phosphoserine; by host is present on Ser176. 2 stretches are compositionally biased toward low complexity: residues 179–206 and 233–249; these read GSQA…RGNS and KVSG…VTKK. Positions 247–364 constitute a CoV N CTD domain; it reads TKKSAAEASK…KHIDAYKAFP (118 aa). The tract at residues 258 to 361 is dimerization; it reads PRQKRTATKS…LLNKHIDAYK (104 aa). Residues 367–378 show a composition bias toward basic and acidic residues; the sequence is EPKKDKKKKTDE. Residues 404 to 420 show a composition bias toward polar residues; sequence RQLQNSMSGASADSTQA.

This sequence belongs to the betacoronavirus nucleocapsid protein family. Homooligomer. Both monomeric and oligomeric forms interact with RNA. Interacts with protein M. Interacts with NSP3; this interaction serves to tether the genome to the newly translated replicase-transcriptase complex at a very early stage of infection. In terms of processing, ADP-ribosylated. The ADP-ribosylation is retained in the virion during infection. Post-translationally, phosphorylated on serine and threonine residues.

It is found in the virion. The protein resides in the host endoplasmic reticulum-Golgi intermediate compartment. It localises to the host Golgi apparatus. In terms of biological role, packages the positive strand viral genome RNA into a helical ribonucleocapsid (RNP) and plays a fundamental role during virion assembly through its interactions with the viral genome and membrane protein M. Plays an important role in enhancing the efficiency of subgenomic viral RNA transcription as well as viral replication. This is Nucleoprotein from Rhinolophus macrotis (Big-eared horseshoe bat).